A 464-amino-acid polypeptide reads, in one-letter code: Glycine--tRNA ligase (464 aa).

The substrate site is built by Arg-104 and Glu-175. Residues 207 to 209 (RNE), 217 to 222 (FRTREF), 292 to 293 (EL), and 336 to 339 (GVNR) each bind ATP. Substrate is bound at residue 222–226 (FEQME). A substrate-binding site is contributed by 332 to 336 (EPALG).

Belongs to the class-II aminoacyl-tRNA synthetase family. Homodimer.

It is found in the cytoplasm. It carries out the reaction tRNA(Gly) + glycine + ATP = glycyl-tRNA(Gly) + AMP + diphosphate. Its function is as follows. Catalyzes the attachment of glycine to tRNA(Gly). This is Glycine--tRNA ligase from Leptospira interrogans serogroup Icterohaemorrhagiae serovar Lai (strain 56601).